The chain runs to 925 residues: Bifunctional uridylyltransferase/uridylyl-removing enzyme (925 aa).

The tract at residues 1 to 382 (MVLPTTKDAT…PPGAEVRRVP (382 aa)) is uridylyltransferase. Positions 383–738 (DSDDFIIDNN…VGFDEARGVT (356 aa)) are uridylyl-removing. In terms of domain architecture, HD spans 498–621 (VDEHLIRCIG…VQSVERMKLL (124 aa)). 2 ACT domains span residues 739-820 (ELTI…DVMP) and 849-925 (MIEV…NTAE).

The protein belongs to the GlnD family. The cofactor is Mg(2+).

The catalysed reaction is [protein-PII]-L-tyrosine + UTP = [protein-PII]-uridylyl-L-tyrosine + diphosphate. It catalyses the reaction [protein-PII]-uridylyl-L-tyrosine + H2O = [protein-PII]-L-tyrosine + UMP + H(+). Its activity is regulated as follows. Uridylyltransferase (UTase) activity is inhibited by glutamine, while glutamine activates uridylyl-removing (UR) activity. Modifies, by uridylylation and deuridylylation, the PII regulatory proteins (GlnB and homologs), in response to the nitrogen status of the cell that GlnD senses through the glutamine level. Under low glutamine levels, catalyzes the conversion of the PII proteins and UTP to PII-UMP and PPi, while under higher glutamine levels, GlnD hydrolyzes PII-UMP to PII and UMP (deuridylylation). Thus, controls uridylylation state and activity of the PII proteins, and plays an important role in the regulation of nitrogen assimilation and metabolism. The polypeptide is Bifunctional uridylyltransferase/uridylyl-removing enzyme (Nitrobacter winogradskyi (strain ATCC 25391 / DSM 10237 / CIP 104748 / NCIMB 11846 / Nb-255)).